The following is a 79-amino-acid chain: Pulmonary surfactant-associated protein B (79 aa).

Residues 4 to 79 form the Saposin B-type domain; it reads PLPFCWLCRT…VCGLVLRCSS (76 aa). 3 cysteine pairs are disulfide-bonded: cysteine 8-cysteine 77, cysteine 11-cysteine 71, and cysteine 35-cysteine 46.

Homodimer; disulfide-linked.

It localises to the secreted. The protein localises to the extracellular space. Its subcellular location is the surface film. Functionally, pulmonary surfactant-associated proteins promote alveolar stability by lowering the surface tension at the air-liquid interface in the peripheral air spaces. SP-B increases the collapse pressure of palmitic acid to nearly 70 millinewtons per meter. This is Pulmonary surfactant-associated protein B (SFTPB) from Sus scrofa (Pig).